The sequence spans 182 residues: Adenine phosphoribosyltransferase (182 aa).

This sequence belongs to the purine/pyrimidine phosphoribosyltransferase family. Homodimer.

The protein resides in the cytoplasm. The catalysed reaction is AMP + diphosphate = 5-phospho-alpha-D-ribose 1-diphosphate + adenine. The protein operates within purine metabolism; AMP biosynthesis via salvage pathway; AMP from adenine: step 1/1. Functionally, catalyzes a salvage reaction resulting in the formation of AMP, that is energically less costly than de novo synthesis. The sequence is that of Adenine phosphoribosyltransferase from Pseudomonas paraeruginosa (strain DSM 24068 / PA7) (Pseudomonas aeruginosa (strain PA7)).